A 618-amino-acid chain; its full sequence is 1-deoxy-D-xylulose-5-phosphate synthase (618 aa).

Thiamine diphosphate contacts are provided by residues His-76 and 117 to 119 (GHS). A Mg(2+)-binding site is contributed by Asp-148. Residues 149–150 (GA), Asn-177, Tyr-284, and Glu-366 contribute to the thiamine diphosphate site. Asn-177 contacts Mg(2+).

The protein belongs to the transketolase family. DXPS subfamily. As to quaternary structure, homodimer. Mg(2+) is required as a cofactor. Thiamine diphosphate serves as cofactor.

It catalyses the reaction D-glyceraldehyde 3-phosphate + pyruvate + H(+) = 1-deoxy-D-xylulose 5-phosphate + CO2. It functions in the pathway metabolic intermediate biosynthesis; 1-deoxy-D-xylulose 5-phosphate biosynthesis; 1-deoxy-D-xylulose 5-phosphate from D-glyceraldehyde 3-phosphate and pyruvate: step 1/1. In terms of biological role, catalyzes the acyloin condensation reaction between C atoms 2 and 3 of pyruvate and glyceraldehyde 3-phosphate to yield 1-deoxy-D-xylulose-5-phosphate (DXP). This chain is 1-deoxy-D-xylulose-5-phosphate synthase, found in Dechloromonas aromatica (strain RCB).